The primary structure comprises 279 residues: Diaminopimelate epimerase (279 aa).

The substrate site is built by N14 and Q68. C77 (proton donor) is an active-site residue. Substrate-binding positions include 78 to 79, N191, and 207 to 208; these read GN and ER. C217 (proton acceptor) is an active-site residue. Residue 218-219 participates in substrate binding; sequence GT.

Belongs to the diaminopimelate epimerase family. As to quaternary structure, homodimer.

It is found in the cytoplasm. The catalysed reaction is (2S,6S)-2,6-diaminopimelate = meso-2,6-diaminopimelate. It functions in the pathway amino-acid biosynthesis; L-lysine biosynthesis via DAP pathway; DL-2,6-diaminopimelate from LL-2,6-diaminopimelate: step 1/1. In terms of biological role, catalyzes the stereoinversion of LL-2,6-diaminopimelate (L,L-DAP) to meso-diaminopimelate (meso-DAP), a precursor of L-lysine. This is Diaminopimelate epimerase from Methanothrix thermoacetophila (strain DSM 6194 / JCM 14653 / NBRC 101360 / PT) (Methanosaeta thermophila).